The sequence spans 49 residues: Osteocalcin (49 aa).

A Pyrrolidone carboxylic acid modification is found at Gln1. The 47-residue stretch at 1–47 (QLINGQGAPAPYPDPLEPKREVCELNPDCDELADQVGLQDAYQRFYG) folds into the Gla domain. Pro9 carries the 4-hydroxyproline modification. Ca(2+) contacts are provided by Glu17, Glu21, Glu24, and Asp30. 3 positions are modified to 4-carboxyglutamate: Glu17, Glu21, and Glu24. A disulfide bridge connects residues Cys23 and Cys29.

Belongs to the osteocalcin/matrix Gla protein family. In terms of processing, gamma-carboxyglutamate residues are formed by vitamin K dependent carboxylation by GGCX. These residues are essential for the binding of calcium. Decarboxylation promotes the hormone activity.

The protein localises to the secreted. The carboxylated form is one of the main organic components of the bone matrix, which constitutes 1-2% of the total bone protein: it acts as a negative regulator of bone formation and is required to limit bone formation without impairing bone resorption or mineralization. The carboxylated form binds strongly to apatite and calcium. Functionally, the uncarboxylated form acts as a hormone secreted by osteoblasts, which regulates different cellular processes, such as energy metabolism, male fertility and brain development. Regulates of energy metabolism by acting as a hormone favoring pancreatic beta-cell proliferation, insulin secretion and sensitivity and energy expenditure. Uncarboxylated osteocalcin hormone also promotes testosterone production in the testes: acts as a ligand for G protein-coupled receptor GPRC6A at the surface of Leydig cells, initiating a signaling response that promotes the expression of enzymes required for testosterone synthesis in a CREB-dependent manner. Also acts as a regulator of brain development: osteocalcin hormone crosses the blood-brain barrier and acts as a ligand for GPR158 on neurons, initiating a signaling response that prevents neuronal apoptosis in the hippocampus, favors the synthesis of all monoamine neurotransmitters and inhibits that of gamma-aminobutyric acid (GABA). Osteocalcin also crosses the placenta during pregnancy and maternal osteocalcin is required for fetal brain development. This Oryctolagus cuniculus (Rabbit) protein is Osteocalcin (BGLAP).